The sequence spans 398 residues: Diaminopropionate ammonia-lyase (398 aa).

The residue at position 77 (Lys-77) is an N6-(pyridoxal phosphate)lysine.

Belongs to the diaminopropionate ammonia-lyase family. Homodimer. The cofactor is pyridoxal 5'-phosphate.

It catalyses the reaction (S)-2,3-diaminopropanoate + H2O + H(+) = pyruvate + 2 NH4(+). It carries out the reaction (R)-2,3-diaminopropanoate + H2O + H(+) = pyruvate + 2 NH4(+). Functionally, catalyzes the alpha,beta-elimination reaction of both L- and D-alpha,beta-diaminopropionate (DAP) to form pyruvate and ammonia. The D-isomer of serine is degraded to pyruvate, though very poorly; other amino acids (L-serine, D- and L-threonine, D- and L-beta-Cl-alanine) are not substrates. This Escherichia coli O157:H7 protein is Diaminopropionate ammonia-lyase (ygeX).